Consider the following 405-residue polypeptide: Phosphopentomutase (405 aa).

The Mn(2+) site is built by Asp10, Asp303, His308, Asp344, His345, and His356.

It belongs to the phosphopentomutase family. Requires Mn(2+) as cofactor.

It localises to the cytoplasm. The enzyme catalyses 2-deoxy-alpha-D-ribose 1-phosphate = 2-deoxy-D-ribose 5-phosphate. It carries out the reaction alpha-D-ribose 1-phosphate = D-ribose 5-phosphate. The protein operates within carbohydrate degradation; 2-deoxy-D-ribose 1-phosphate degradation; D-glyceraldehyde 3-phosphate and acetaldehyde from 2-deoxy-alpha-D-ribose 1-phosphate: step 1/2. Isomerase that catalyzes the conversion of deoxy-ribose 1-phosphate (dRib-1-P) and ribose 1-phosphate (Rib-1-P) to deoxy-ribose 5-phosphate (dRib-5-P) and ribose 5-phosphate (Rib-5-P), respectively. The protein is Phosphopentomutase of Shewanella woodyi (strain ATCC 51908 / MS32).